A 542-amino-acid polypeptide reads, in one-letter code: Glucans biosynthesis protein G (542 aa).

The N-terminal stretch at 1-34 (MVSLLRCPSSKPYSSLICSLTLGAVVALSGVAYA) is a signal peptide.

Belongs to the OpgD/OpgG family.

Its subcellular location is the periplasm. It participates in glycan metabolism; osmoregulated periplasmic glucan (OPG) biosynthesis. Functionally, involved in the biosynthesis of osmoregulated periplasmic glucans (OPGs). The sequence is that of Glucans biosynthesis protein G from Shewanella baltica (strain OS223).